The sequence spans 202 residues: UPF0056 membrane protein PH0214 (202 aa).

The next 6 membrane-spanning stretches (helical) occupy residues 5–25 (ILSS…ILLV), 47–67 (IGFI…QDIF), 76–96 (VAGG…GGMV), 104–124 (ILAL…AAIT), 135–155 (IIVS…LMMI), and 174–194 (IIGL…AGGI).

This sequence belongs to the UPF0056 (MarC) family.

The protein localises to the cell membrane. This chain is UPF0056 membrane protein PH0214, found in Pyrococcus horikoshii (strain ATCC 700860 / DSM 12428 / JCM 9974 / NBRC 100139 / OT-3).